A 1623-amino-acid chain; its full sequence is MAAEASKTGPSRSSYQRMGRKSQPWGAAEIQCTRCGRRVSRSSGHHCELQCGHAFCELCLLMTEECTTIICPDCEVATAVNTRQRYYPMAGYIKEDSIMEKLQPKTIKNCSQDFKKTADQLTTGLERSASTDKTLLNSSAVMLDTNTAEEIDEALNTAHHSFEQLSIAGKALEHMQKQTIEERERVIEVVEKQFDQLLAFFDSRKKNLCEEFARTTDDYLSNLIKAKSYIEEKKNNLNAAMNIARALQLSPSLRTYCDLNQIIRTLQLTSDSELAQVSSPQLRNPPRLSVNCSEIICMFNNMGKIEFRDSTKCYPQENEIRQNVQKKYNNKKELSCYDTYPPLEKKKVDMSVLTSEAPPPPLQPETNDVHLEAKNFQPQKDVATASPKTIAVLPQMGSSPDVIIEEIIEDNVESSAELVFVSHVIDPCHFYIRKYSQIKDAKVLEKKVNEFCNRSSHLDPSDILELGARIFVSSIKNGMWCRGTITELIPIEGRNTRKPCSPTRLFVHEVALIQIFMVDFGNSEVLIVTGVVDTHVRPEHSAKQHIALNDLCLVLRKSEPYTEGLLKDIQPLAQPCSLKDIVPQNSNEGWEEEAKVEFLKMVNNKAVSMKVFREEDGVLIVDLQKPPPNKISSDMPVSLRDALVFMELAKFKSQSLRSHFEKNTTLHYHPPILPKEMTDVSVTVCHINSPGDFYLQLIEGLDILFLLKTIEEFYKSEDGENLEILCPVQDQACVAKFEDGIWYRAKVIGLPGHQEVEVKYVDFGNTAKITIKDVRKIKDEFLNAPEKAIKCKLAYIEPYKRTMQWSKEAKEKFEEKAQDKFMTCSVIKILEDNVLLVELFDSLGAPEMTTTSINDQLVKEGLASYEIGYILKDNSQKHIEVWDPSPEEIISNEVHNLNPVSAKSLPNENFQSLYNKELPVHICNVISPEKIYVQWLLTENLLNSLEEKMIAAYENSKWEPVKWENDMHCAVKIQDKNQWRRGQIIRMVTDTLVEVLLYDVGVELVVNVDCLRKLEENLKTMGRLSLECSLVDIRPAGGSDKWTATACDCLSLYLTGAVATIILQVDSEENNTTWPLPVKIFCRDEKGERVDVSKYLIKKGLALRERRINNLDNSHSLSEKSLEVPLEQEDSVVTNCIKTNFDPDKKTADIISEQKVSEFQEKILEPRTTRGYKPPAIPNMNVFEATVSCVGDDGTIFVVPKLSEFELIKMTNEIQSNLKCLGLLEPYFWKKGEACAVRGSDTLWYRGKVMEVVGGAVRVQYLDHGFTEKIPQCHLYPILLYPDIPQFCIPCQLHNTTPVGNVWQPDAIEVLQQLLSKRQVDIHIMELPKNPWEKLSIHLYFDGMSLSYFMAYYKYCTSEHTEEMLKEKPRSDHDKKYEEEQWEIRFEELLSAETDTPLLPPYLSSSLPSPGELYAVQVKHVVSPNEVYICLDSIETSNQSNQHSDTDDSGVSGESESESLDEALQRVNKKVEALPPLTDFRTEMPCLAEYDDGLWYRAKIVAIKEFNPLSILVQFVDYGSTAKLTLNRLCQIPSHLMRYPARAIKVLLAGFKPPLRDLGETRIPYCPKWSMEALWAMIDCLQGKQLYAVSMAPAPEQIVTLYDDEQHPVHMPLVEMGLADKDE.

The segment at 1-22 is disordered; sequence MAAEASKTGPSRSSYQRMGRKS. An RING-type zinc finger spans residues 32–75; that stretch reads CTRCGRRVSRSSGHHCELQCGHAFCELCLLMTEECTTIICPDCE. Residue K234 is modified to N6-acetyllysine. Tudor domains follow at residues 726-784, 962-1021, and 1228-1285; these read CPVQ…FLNA, KWEN…LKTM, and FWKK…PDIP. Residues 1438-1462 form a disordered region; that stretch reads NQSNQHSDTDDSGVSGESESESLDE. One can recognise a Tudor 4 domain in the interval 1479–1539; it reads DFRTEMPCLA…CQIPSHLMRY (61 aa).

Interacts with MXD1, MXD3, MXD4, MXI1 and PIWIL1. Self-associates. As to expression, testis specific.

It localises to the cytoplasm. The protein resides in the nucleus. In terms of biological role, seems to be involved in regulation of transcriptional activity of MYC. In vitro, inhibits DNA-binding activity of Mad-MAX heterodimers. Can recruit Mad transcriptional repressors (MXD1, MXD3, MXD4 and MXI1) to the cytoplasm. May be involved in spermiogenesis. The chain is RING finger protein 17 (RNF17) from Homo sapiens (Human).